The following is a 358-amino-acid chain: Protein-glutamate methylesterase/protein-glutamine glutaminase 2 (358 aa).

In terms of domain architecture, Response regulatory spans R8–E125. At D59 the chain carries 4-aspartylphosphate. The region spanning P157–A352 is the CheB-type methylesterase domain. Catalysis depends on residues S177, H203, and D299.

Belongs to the CheB family. Phosphorylated by CheA. Phosphorylation of the N-terminal regulatory domain activates the methylesterase activity.

It localises to the cytoplasm. The catalysed reaction is [protein]-L-glutamate 5-O-methyl ester + H2O = L-glutamyl-[protein] + methanol + H(+). It catalyses the reaction L-glutaminyl-[protein] + H2O = L-glutamyl-[protein] + NH4(+). Involved in chemotaxis. Part of a chemotaxis signal transduction system that modulates chemotaxis in response to various stimuli. Catalyzes the demethylation of specific methylglutamate residues introduced into the chemoreceptors (methyl-accepting chemotaxis proteins or MCP) by CheR. Also mediates the irreversible deamidation of specific glutamine residues to glutamic acid. The chain is Protein-glutamate methylesterase/protein-glutamine glutaminase 2 from Xanthomonas oryzae pv. oryzae (strain MAFF 311018).